The following is a 696-amino-acid chain: UvrABC system protein C (696 aa).

The region spanning 16 to 95 is the GIY-YIG domain; it reads TEPGVYKFRD…IKRFDPRFNV (80 aa). In terms of domain architecture, UVR spans 208–243; it reads DKVTRKLNADMMAAAEELDFERAARLRDDLEAIDKV.

This sequence belongs to the UvrC family. Interacts with UvrB in an incision complex.

Its subcellular location is the cytoplasm. The UvrABC repair system catalyzes the recognition and processing of DNA lesions. UvrC both incises the 5' and 3' sides of the lesion. The N-terminal half is responsible for the 3' incision and the C-terminal half is responsible for the 5' incision. The protein is UvrABC system protein C of Corynebacterium glutamicum (strain R).